The following is a 131-amino-acid chain: Holo-[acyl-carrier-protein] synthase (131 aa).

Mg(2+) contacts are provided by aspartate 8 and glutamate 59.

It belongs to the P-Pant transferase superfamily. AcpS family. Mg(2+) is required as a cofactor.

Its subcellular location is the cytoplasm. It catalyses the reaction apo-[ACP] + CoA = holo-[ACP] + adenosine 3',5'-bisphosphate + H(+). Functionally, transfers the 4'-phosphopantetheine moiety from coenzyme A to a Ser of acyl-carrier-protein. This is Holo-[acyl-carrier-protein] synthase from Rickettsia conorii (strain ATCC VR-613 / Malish 7).